A 261-amino-acid chain; its full sequence is Sulfur carrier protein FdhD (261 aa).

Cysteine 105 acts as the Cysteine persulfide intermediate in catalysis. 245–250 (FIRGDR) is a binding site for Mo-bis(molybdopterin guanine dinucleotide).

Belongs to the FdhD family.

Its subcellular location is the cytoplasm. In terms of biological role, required for formate dehydrogenase (FDH) activity. Acts as a sulfur carrier protein that transfers sulfur from IscS to the molybdenum cofactor prior to its insertion into FDH. This is Sulfur carrier protein FdhD from Listeria monocytogenes serotype 4b (strain F2365).